Reading from the N-terminus, the 72-residue chain is Protein RALF-like 36 (72 aa).

The first 27 residues, 1–27 (MGISKKTVVQSFALIIIISIVMSTTEA), serve as a signal peptide directing secretion. 2 cysteine pairs are disulfide-bonded: C43–C51 and C63–C69.

The protein belongs to the plant rapid alkalinization factor (RALF) family.

The protein localises to the secreted. In terms of biological role, cell signaling peptide that may regulate plant stress, growth, and development. Mediates a rapid alkalinization of extracellular space by mediating a transient increase in the cytoplasmic Ca(2+) concentration leading to a calcium-dependent signaling events through a cell surface receptor and a concomitant activation of some intracellular mitogen-activated protein kinases. The sequence is that of Protein RALF-like 36 from Arabidopsis thaliana (Mouse-ear cress).